The chain runs to 203 residues: 3-isopropylmalate dehydratase small subunit (203 aa).

This sequence belongs to the LeuD family. LeuD type 1 subfamily. Heterodimer of LeuC and LeuD.

It carries out the reaction (2R,3S)-3-isopropylmalate = (2S)-2-isopropylmalate. Its pathway is amino-acid biosynthesis; L-leucine biosynthesis; L-leucine from 3-methyl-2-oxobutanoate: step 2/4. Catalyzes the isomerization between 2-isopropylmalate and 3-isopropylmalate, via the formation of 2-isopropylmaleate. The sequence is that of 3-isopropylmalate dehydratase small subunit from Pelagibacter ubique (strain HTCC1062).